The primary structure comprises 875 residues: Alanine--tRNA ligase (875 aa).

Zn(2+)-binding residues include histidine 562, histidine 566, cysteine 665, and histidine 669.

It belongs to the class-II aminoacyl-tRNA synthetase family. Zn(2+) serves as cofactor.

Its subcellular location is the cytoplasm. It carries out the reaction tRNA(Ala) + L-alanine + ATP = L-alanyl-tRNA(Ala) + AMP + diphosphate. Catalyzes the attachment of alanine to tRNA(Ala) in a two-step reaction: alanine is first activated by ATP to form Ala-AMP and then transferred to the acceptor end of tRNA(Ala). Also edits incorrectly charged Ser-tRNA(Ala) and Gly-tRNA(Ala) via its editing domain. This Saccharophagus degradans (strain 2-40 / ATCC 43961 / DSM 17024) protein is Alanine--tRNA ligase.